Consider the following 416-residue polypeptide: Subtilisin-like protease 12 (416 aa).

The N-terminal stretch at 1–19 (MSILKMMLIYFAIFWVVNA) is a signal peptide. The propeptide occupies 20-116 (AQLLDIDSQG…VEPNKEMQVA (97 aa)). The Inhibitor I9 domain occupies 35 to 115 (YIVVMKDRVS…FVEPNKEMQV (81 aa)). Residues asparagine 123, asparagine 136, and asparagine 150 are each glycosylated (N-linked (GlcNAc...) asparagine). Positions 125–416 (TWGLSRISHK…NKLLYNGSGA (292 aa)) constitute a Peptidase S8 domain. Residues aspartate 157 and histidine 188 each act as charge relay system in the active site. Asparagine 249, asparagine 305, asparagine 334, and asparagine 353 each carry an N-linked (GlcNAc...) asparagine glycan. Catalysis depends on serine 362, which acts as the Charge relay system. Residues asparagine 404 and asparagine 412 are each glycosylated (N-linked (GlcNAc...) asparagine).

Belongs to the peptidase S8 family.

It localises to the secreted. Functionally, secreted subtilisin-like serine protease with keratinolytic activity that contributes to pathogenicity. This is Subtilisin-like protease 12 (SUB12) from Arthroderma benhamiae (strain ATCC MYA-4681 / CBS 112371) (Trichophyton mentagrophytes).